Reading from the N-terminus, the 376-residue chain is N,N'-diacetylbacillosaminyl-diphospho-undecaprenol alpha-1,3-N-acetylgalactosaminyltransferase (376 aa).

This sequence belongs to the glycosyltransferase group 1 family.

It catalyses the reaction N,N'-diacetyl-alpha-D-bacillosaminyl-tri-trans,hepta-cis-undecaprenyl diphosphate + UDP-N-acetyl-alpha-D-galactosamine = N-acetyl-alpha-D-galactosaminyl-(1-&gt;3)-N,N'-diacetyl-alpha-D-bacillosaminyl-tri-trans,hepta-cis-undecaprenyl diphosphate + UDP + H(+). The protein operates within protein modification; protein glycosylation. Adds the first GalNAc residue on to the isoprenoid-linked bacillosamine (2,4-diacetamido-2,4,6-trideoxyglucose) carrier in the N-linked protein glycosylation pathway. Acts first on the undecaprenylpyrophosphate-linked bacillosamine (Und-PP-Bac) substrate to yield the disaccharide. This is N,N'-diacetylbacillosaminyl-diphospho-undecaprenol alpha-1,3-N-acetylgalactosaminyltransferase (pglA) from Campylobacter jejuni subsp. jejuni serotype O:2 (strain ATCC 700819 / NCTC 11168).